We begin with the raw amino-acid sequence, 178 residues long: PRA1 family protein 2 (178 aa).

Topologically, residues 1–41 are cytoplasmic; sequence MSEVRLPPLRALDDFVLGSARLAAPDPCDPQRWCHRVINNL. Residues 42-62 form a helical membrane-spanning segment; the sequence is LYYQTNYLLCFGIGLALAGYV. Over 63–64 the chain is Extracellular; it reads RP. Residues 65-85 form a helical membrane-spanning segment; the sequence is LHTLLSALVVAVALGVLVWAA. Topologically, residues 86–96 are cytoplasmic; sequence ETRAAVRRCRR. A helical transmembrane segment spans residues 97 to 119; the sequence is SHPAACLAAVLAVGLLVLWVAGG. Topologically, residues 120–122 are extracellular; that stretch reads ACT. A helical membrane pass occupies residues 123 to 140; sequence FLFSIAGPVLLILVHASL. Topologically, residues 141–178 are cytoplasmic; sequence RLRNLKNKIENKIESIGLKRTPMGLLLEALGQEQEAGS.

Belongs to the PRA1 family. As to quaternary structure, interacts with CCR5 and GDE1. In terms of tissue distribution, strong expression in the brain, small intestine, lung, spleen, and pancreas as well as in tumor tissues of the breast, colon, lung and ovary, with a weaker expression in normal tissues of the same patient. High expression in neuroblastic tumors. Strongly expressed in Purkinje cells and more moderately in cells of the molecular and the granular layers in the cerebellum. Detected in neuronal cells, but not in non-neuronal cells in the cerebral cortex, hippocampus, and lateral ventricles.

It localises to the endosome membrane. In terms of biological role, may be involved in ER/Golgi transport and vesicular traffic. Plays a proapoptotic role in cerulenin-induced neuroblastoma apoptosis. The polypeptide is PRA1 family protein 2 (PRAF2) (Homo sapiens (Human)).